Here is a 159-residue protein sequence, read N- to C-terminus: Regulator of G-protein signaling 13 (159 aa).

The RGS domain occupies 34-150 (SFENLMATKY…LKSEMYQKLL (117 aa)).

Its function is as follows. Inhibits signal transduction by increasing the GTPase activity of G protein alpha subunits thereby driving them into their inactive GDP-bound form. Binds to both G(i)-alpha and G(q)-alpha. The protein is Regulator of G-protein signaling 13 (RGS13) of Homo sapiens (Human).